We begin with the raw amino-acid sequence, 493 residues long: Xaa-Pro dipeptidase (493 aa).

Residue A2 is modified to N-acetylalanine. S167 carries the post-translational modification Phosphoserine. H255 provides a ligand contact to a dipeptide. 3 residues coordinate Mn(2+): D276, D287, and H370. A dipeptide is bound at residue D287. Positions 377 and 398 each coordinate a dipeptide. Residues E412 and E452 each coordinate Mn(2+).

Belongs to the peptidase M24B family. Eukaryotic-type prolidase subfamily. In terms of assembly, homodimer. The cofactor is Mn(2+).

It catalyses the reaction Xaa-L-Pro dipeptide + H2O = an L-alpha-amino acid + L-proline. In terms of biological role, dipeptidase that catalyzes the hydrolysis of dipeptides with a prolyl (Xaa-Pro) or hydroxyprolyl residue in the C-terminal position. The preferred dipeptide substrate is Gly-Pro, but other Xaa-Pro dipeptides, such as Ala-Pro, Met-Pro, Phe-Pro, Val-Pro and Leu-Pro, can be cleaved. Plays an important role in collagen metabolism because the high level of iminoacids in collagen. This Mus musculus (Mouse) protein is Xaa-Pro dipeptidase (Pepd).